We begin with the raw amino-acid sequence, 658 residues long: UvrABC system protein B (658 aa).

A Helicase ATP-binding domain is found at 25–416 (QFIHNGAQYS…QEHIAEQIIR (392 aa)). 38 to 45 (GVTGSGKT) contributes to the ATP binding site. Residues 91 to 114 (HFDYYQPEAYIPRRDLFIEKDSSI) carry the Beta-hairpin motif. The region spanning 433 to 607 (AVLDLYDEIK…ELKIESSGLS (175 aa)) is the Helicase C-terminal domain. One can recognise a UVR domain in the interval 623-658 (ESIIKELNIKMHQAAKALEFEEAARLRDEIARIRTM).

Belongs to the UvrB family. As to quaternary structure, forms a heterotetramer with UvrA during the search for lesions. Interacts with UvrC in an incision complex.

The protein localises to the cytoplasm. Its function is as follows. The UvrABC repair system catalyzes the recognition and processing of DNA lesions. A damage recognition complex composed of 2 UvrA and 2 UvrB subunits scans DNA for abnormalities. Upon binding of the UvrA(2)B(2) complex to a putative damaged site, the DNA wraps around one UvrB monomer. DNA wrap is dependent on ATP binding by UvrB and probably causes local melting of the DNA helix, facilitating insertion of UvrB beta-hairpin between the DNA strands. Then UvrB probes one DNA strand for the presence of a lesion. If a lesion is found the UvrA subunits dissociate and the UvrB-DNA preincision complex is formed. This complex is subsequently bound by UvrC and the second UvrB is released. If no lesion is found, the DNA wraps around the other UvrB subunit that will check the other stand for damage. This chain is UvrABC system protein B, found in Helicobacter hepaticus (strain ATCC 51449 / 3B1).